A 161-amino-acid chain; its full sequence is Nucleotide-binding protein Sden_0770 (161 aa).

Belongs to the YajQ family.

Its function is as follows. Nucleotide-binding protein. This Shewanella denitrificans (strain OS217 / ATCC BAA-1090 / DSM 15013) protein is Nucleotide-binding protein Sden_0770.